The chain runs to 3814 residues: Hybrid PKS-NRPS synthetase pyvA (3814 aa).

The Ketosynthase family 3 (KS3) domain maps to 1-340 (MDPQQRLLLE…GSNAHVILES (340 aa)). Active-site for beta-ketoacyl synthase activity residues include cysteine 87, histidine 222, and histidine 261. The tract at residues 441 to 758 (VFTGQGAQWH…PYFASLSRGV (318 aa)) is malonyl-CoA:ACP transacylase (MAT) domain. The For malonyltransferase activity role is filled by serine 533. An N-terminal hotdog fold region spans residues 835 to 970 (HPILGAKMPG…GLISISTATT (136 aa)). Residues 835–1149 (HPILGAKMPG…LRLTSLSNGR (315 aa)) form a dehydratase (DH) domain region. The PKS/mFAS DH domain maps to 835-1151 (HPILGAKMPG…LTSLSNGRAA (317 aa)). Histidine 867 (proton acceptor; for dehydratase activity) is an active-site residue. Residues 970–993 (TADGAPSRKPYRQHPQPQPGRMST) are disordered. The interval 991-1151 (MSTASFPAQS…LTSLSNGRAA (161 aa)) is C-terminal hotdog fold. Residue aspartate 1057 is the Proton donor; for dehydratase activity of the active site. Residues 1520-1836 (GLLETLVWED…MGRHTGKVVL (317 aa)) form an enoyl reductase (ER) domain region. The tract at residues 1864 to 2036 (TYLLVGGLGG…PASSMNCGRI (173 aa)) is ketoreductase (KR) domain. One can recognise a Carrier 1 domain in the interval 2141–2220 (IDLSDRVALL…ALVEKAIGLF (80 aa)). At serine 2180 the chain carries O-(pantetheine 4'-phosphoryl)serine. The segment covering 2228 to 2238 (QQQQQSVQSSS) has biased composition (low complexity). The disordered stretch occupies residues 2228-2270 (QQQQQSVQSSSAPSNDDQSPTFNKNLDSQDPSTSLQIPKADCS). Residues 2239-2263 (APSNDDQSPTFNKNLDSQDPSTSLQ) show a composition bias toward polar residues. The condensation (C) domain 7 stretch occupies residues 2273-2718 (LPMSTFQNRL…PEVRLAGTLE (446 aa)). The segment at 2738-3149 (PLNLPRRIVE…DGQLEFLGRI (412 aa)) is adenylation (A) domain 8. The segment at 3257-3304 (SGKTDRRALGASQAPGTPPQHGAGPAAASTLDPAQAQAQDRADEEVGD) is disordered. Positions 3304–3379 (DRTMATVTRV…QLVELVHSKV (76 aa)) constitute a Carrier 2 domain. Residue serine 3339 is modified to O-(pantetheine 4'-phosphoryl)serine. A thioesterase (TE) domain region spans residues 3428–3680 (MTGAESFTGI…VDLVPVNYLT (253 aa)).

The protein in the C-terminal section; belongs to the NRP synthetase family.

Its pathway is secondary metabolite biosynthesis. In terms of biological role, hybrid PKS-NRPS synthetase; part of the gene cluster that mediates the biosynthesis of pyranoviolin A, a pyranonigrin analog with a C-3 methoxy group. Initially, the PKS portion of pyvA synthesizes C-10 carbon chain from 5 molecules of malonyl-CoA, which is then condensed with the thiolation (T) domain-bound glycine activated by the adenylation (A) domain. The subsequent chain release by Dieckmann condensation (DKC) could be catalyzed by the TE domain present at the C-terminus of pyvA and/or the alpha/beta hydrolase pyvD, installing the tetramic acid moiety. The FAD-dependent monooxygenase pyvC next epoxidizes one of the olefins of the polyketide part, and the epoxide ring-opening induces the dihydro-gamma-pyrone ring formation. The cytochrome P450 monooxygeanse pyvB would be responsible for the 2 consecutive reactions, in which the dihydro-gamma-pyrone is oxidized to gamma-pyrone and C-7 is hydroxylated to yield pyranonigrin F. Finally, the O-methyltransferase pyvH methylates the C-3 hydroxy group to complete the biosynthesis. The sequence is that of Hybrid PKS-NRPS synthetase pyvA from Aspergillus violaceofuscus (strain CBS 115571).